We begin with the raw amino-acid sequence, 583 residues long: uncharacterized protein (583 aa).

24-140 lines the a nucleoside 3',5'-cyclic phosphate pocket; sequence ILADIDDEQL…SAMLRAMARM (117 aa). Residues 309 to 469 form the PNPLA domain; sequence LVMAGGGARG…LNNLPANVMC (161 aa). The GXGXXG signature appears at 313-318; that stretch reads GGGARG. Positions 340-344 match the GXSXG motif; that stretch reads GTSSG. S342 (nucleophile) is an active-site residue. Catalysis depends on D456, which acts as the Proton acceptor. The short motif at 456-458 is the DGA/G element; it reads DGG.

The protein belongs to the NTE family.

This is an uncharacterized protein from Mycobacterium tuberculosis (strain CDC 1551 / Oshkosh).